Here is a 218-residue protein sequence, read N- to C-terminus: MIP18 family protein galla-1 (218 aa).

The segment at 1-59 (MLSYIKRKLSESDSGVSSVATVTSSCGGDSGRAGGTGSSESGTGSSSASISGRSQNADE) is disordered. The segment covering 12–27 (SDSGVSSVATVTSSCG) has biased composition (low complexity). The residue at position 14 (Ser-14) is a Phosphoserine. The segment covering 28-37 (GDSGRAGGTG) has biased composition (gly residues). Residues 38–54 (SSESGTGSSSASISGRS) are compositionally biased toward low complexity. A Phosphoserine modification is found at Ser-65.

It belongs to the MIP18 family. Component of the CGX complex composed of crb, galla (galla-1 or galla-2) and Xpd. Interacts with crb (via intracellular domain). Is not able to interact with Xpd in the absence of crb.

Its subcellular location is the apical cell membrane. It localises to the cytoplasm. The protein resides in the cytoskeleton. It is found in the spindle. Its function is as follows. Component of the crb-galla-Xpd (CGX) complex which is essential for proper mitotic chromosome segregation in early embryos. The CGX complex is also required for cell proliferation in developing wing disks. In the CGX complex, acts with crb to recruit Xpd thus forming the functional complex. The protein is MIP18 family protein galla-1 of Drosophila melanogaster (Fruit fly).